Consider the following 954-residue polypeptide: Calsyntenin-1 (954 aa).

The signal sequence occupies residues 1-25; sequence MRIRGVKPFASAVGLLLGLLYAVDA. Residues 26-833 lie on the Extracellular side of the membrane; sequence AKVNKHKPWI…THQASVVPSA (808 aa). 2 Cadherin domains span residues 35–151 and 152–252; these read IETT…SPVF and KEKS…KPSW. N-linked (GlcNAc...) asparagine glycans are attached at residues Asn-333, Asn-353, and Asn-552. Residues 834-854 form a helical membrane-spanning segment; it reads ATIVIVVCVSFLVFMIILGVF. Residues 855 to 954 are Cytoplasmic-facing; that stretch reads RIRAAHQRTM…LEWDDSTLTY (100 aa). The tract at residues 891 to 954 is disordered; it reads TYEDQHSSEE…LEWDDSTLTY (64 aa). Positions 900–935 are enriched in acidic residues; the sequence is EEGDEEEEESEDGEEEDDITSAESDSSEDEAGEQED.

It belongs to the calsyntenin family. In terms of assembly, homooligomer and heterooligomer; mediates both homophilic and heterophilc interactions with clstn2 and clstn3 paralogs via cadherin domains. In terms of tissue distribution, by 48 hours post-fertilization (hpf), widely expressed in the brain, with strong expression in the telencephalon and the midbrain.

The protein resides in the postsynaptic cell membrane. The protein localises to the endoplasmic reticulum membrane. It localises to the golgi apparatus membrane. It is found in the cell projection. Its subcellular location is the neuron projection. Its function is as follows. Postsynaptic adhesion molecule involved in vesicle trafficking; required for branching of peripheral but not central axons of sensory neurons. Promotes synapse development by acting as a cell adhesion molecule at the postsynaptic membrane, which associates with presynaptic neurexins. In Danio rerio (Zebrafish), this protein is Calsyntenin-1.